The sequence spans 473 residues: MKWSTKQRYRTYDSYSESDLESLRKLALKSPWKSNFHIEPETGLLNDPNGFSYFNEKWHLFYQHFPFGPVHGLKSWVHLVSDDLVHFEKTGLVLYPDTKYDNAGVYSGSALAFENFLFLIYTGNHRGEDWVRTPYQLGAKIDKNNQLVKFTEPLIYPDFSQTTDHFRDPQIFSFQGQIYCLIGAQSSQKNGIIKLYKAIENNLTDWKDLGNLDFSKEKMGYMIECPNLIFINGRSVLVFCPQGLDKSIVKYDNIYPNVYVIADDFTTGSKNQLKNAGQLINLDEGFDCYATQSFNAPDGSAYAISWLGLPETSYPTDKYNVQGVLSMVKKLSIKDNKLYQYPVEKMKELRQMEQDLLLADNNIITSNSYELEVDFRQQTSTLLSLMTNEKGDSALKVEIDKENNTITLIRNYEKRLAHVKIEKMNVFIDQSIFEIFINDGEKVLSDCRVFPNKNQYSIRSQNPIKIKLWELKK.

Residues 44–47 (LLND), Gln-63, 106–107 (YS), 167–168 (RD), and Glu-224 each bind substrate. Residue Asp-47 is part of the active site.

It belongs to the glycosyl hydrolase 32 family.

The protein localises to the cytoplasm. It carries out the reaction Hydrolysis of terminal non-reducing beta-D-fructofuranoside residues in beta-D-fructofuranosides.. It participates in glycan biosynthesis; sucrose metabolism. In Lactococcus lactis subsp. lactis (Streptococcus lactis), this protein is Sucrose-6-phosphate hydrolase (scrB).